Here is a 397-residue protein sequence, read N- to C-terminus: Digeranylgeranylglycerophospholipid reductase 3 (397 aa).

The FAD site is built by alanine 16, aspartate 35, cysteine 46, alanine 47, glycine 49, arginine 102, alanine 126, aspartate 283, glycine 295, and isoleucine 296. Lysine 338 contacts a 2,3-bis-O-(geranylgeranyl)-sn-glycerol 1-phospholipid.

Belongs to the geranylgeranyl reductase family. DGGGPL reductase subfamily. The cofactor is FAD.

The enzyme catalyses a 2,3-bis-O-phytanyl-sn-glycerol 1-phospholipid + 8 A = a 2,3-bis-O-(geranylgeranyl)-sn-glycerol 1-phospholipid + 8 AH2. The catalysed reaction is 2,3-bis-O-(phytanyl)-sn-glycerol 1-phosphate + 8 A = 2,3-bis-O-(geranylgeranyl)-sn-glycerol 1-phosphate + 8 AH2. It carries out the reaction CDP-2,3-bis-O-(geranylgeranyl)-sn-glycerol + 8 AH2 = CDP-2,3-bis-O-(phytanyl)-sn-glycerol + 8 A. It catalyses the reaction archaetidylserine + 8 AH2 = 2,3-bis-O-phytanyl-sn-glycero-3-phospho-L-serine + 8 A. Its pathway is membrane lipid metabolism; glycerophospholipid metabolism. Functionally, is involved in the reduction of 2,3-digeranylgeranylglycerophospholipids (unsaturated archaeols) into 2,3-diphytanylglycerophospholipids (saturated archaeols) in the biosynthesis of archaeal membrane lipids. Catalyzes the formation of archaetidic acid (2,3-di-O-phytanyl-sn-glyceryl phosphate) from 2,3-di-O-geranylgeranylglyceryl phosphate (DGGGP) via the hydrogenation of each double bond of the isoprenoid chains. Is also probably able to reduce double bonds of geranyl groups in CDP-2,3-bis-O-(geranylgeranyl)-sn-glycerol and archaetidylserine, thus acting at various stages in the biosynthesis of archaeal membrane lipids. This is Digeranylgeranylglycerophospholipid reductase 3 from Methanosphaera stadtmanae (strain ATCC 43021 / DSM 3091 / JCM 11832 / MCB-3).